The chain runs to 530 residues: Membrane protein insertase YidC (530 aa).

The next 4 membrane-spanning stretches (helical) occupy residues 5 to 25 (VVIA…MFPP), 348 to 368 (YGLA…PLTH), 418 to 438 (LPML…MFSI), and 492 to 512 (PVVF…YWLI).

It belongs to the OXA1/ALB3/YidC family. Type 1 subfamily. Interacts with the Sec translocase complex via SecD. Specifically interacts with transmembrane segments of nascent integral membrane proteins during membrane integration.

Its subcellular location is the cell inner membrane. Required for the insertion and/or proper folding and/or complex formation of integral membrane proteins into the membrane. Involved in integration of membrane proteins that insert both dependently and independently of the Sec translocase complex, as well as at least some lipoproteins. Aids folding of multispanning membrane proteins. The polypeptide is Membrane protein insertase YidC (Geotalea daltonii (strain DSM 22248 / JCM 15807 / FRC-32) (Geobacter daltonii)).